Consider the following 340-residue polypeptide: Ketol-acid reductoisomerase (NADP(+)) (340 aa).

Residues 3–183 enclose the KARI N-terminal Rossmann domain; sequence LPIYYDKDCD…GGGRTGIIHT (181 aa). Residues 26–29, Ser-54, and 84–87 contribute to the NADP(+) site; these read FGSQ and DEIQ. Residue His-109 is part of the active site. Gly-135 lines the NADP(+) pocket. The KARI C-terminal knotted domain maps to 184–329; the sequence is TFKDETETDL…KRLRAMMPWI (146 aa). Positions 192, 196, 228, and 232 each coordinate Mg(2+). Ser-253 contributes to the substrate binding site.

It belongs to the ketol-acid reductoisomerase family. Requires Mg(2+) as cofactor.

It carries out the reaction (2R)-2,3-dihydroxy-3-methylbutanoate + NADP(+) = (2S)-2-acetolactate + NADPH + H(+). The catalysed reaction is (2R,3R)-2,3-dihydroxy-3-methylpentanoate + NADP(+) = (S)-2-ethyl-2-hydroxy-3-oxobutanoate + NADPH + H(+). The protein operates within amino-acid biosynthesis; L-isoleucine biosynthesis; L-isoleucine from 2-oxobutanoate: step 2/4. Its pathway is amino-acid biosynthesis; L-valine biosynthesis; L-valine from pyruvate: step 2/4. In terms of biological role, involved in the biosynthesis of branched-chain amino acids (BCAA). Catalyzes an alkyl-migration followed by a ketol-acid reduction of (S)-2-acetolactate (S2AL) to yield (R)-2,3-dihydroxy-isovalerate. In the isomerase reaction, S2AL is rearranged via a Mg-dependent methyl migration to produce 3-hydroxy-3-methyl-2-ketobutyrate (HMKB). In the reductase reaction, this 2-ketoacid undergoes a metal-dependent reduction by NADPH to yield (R)-2,3-dihydroxy-isovalerate. The chain is Ketol-acid reductoisomerase (NADP(+)) from Nitratiruptor sp. (strain SB155-2).